The primary structure comprises 496 residues: Ganglioside-induced differentiation-associated protein 2 (496 aa).

The interval 25–48 (EEGEDVPDGGRKDVPDGGSHSPFP) is disordered. Positions 44–224 (HSPFPYRKDI…TYRRLLPLYF (181 aa)) constitute a Macro domain. A CRAL-TRIO domain is found at 329–483 (DLSDIAALKA…FVLDYDAREN (155 aa)).

Belongs to the GDAP2 family.

The protein is Ganglioside-induced differentiation-associated protein 2 of Xenopus laevis (African clawed frog).